Reading from the N-terminus, the 692-residue chain is Elongation factor G (692 aa).

Residues 8 to 283 form the tr-type G domain; it reads QDLRNIGIVA…AVVDYLPSPL (276 aa). Residues 17–24, 81–85, and 135–138 contribute to the GTP site; these read AHIDAGKT, DTPGH, and NKLD.

The protein belongs to the TRAFAC class translation factor GTPase superfamily. Classic translation factor GTPase family. EF-G/EF-2 subfamily.

The protein resides in the cytoplasm. Its function is as follows. Catalyzes the GTP-dependent ribosomal translocation step during translation elongation. During this step, the ribosome changes from the pre-translocational (PRE) to the post-translocational (POST) state as the newly formed A-site-bound peptidyl-tRNA and P-site-bound deacylated tRNA move to the P and E sites, respectively. Catalyzes the coordinated movement of the two tRNA molecules, the mRNA and conformational changes in the ribosome. This chain is Elongation factor G, found in Hydrogenobaculum sp. (strain Y04AAS1).